A 159-amino-acid polypeptide reads, in one-letter code: 3-hydroxyacyl-[acyl-carrier-protein] dehydratase FabZ (159 aa).

His-58 is a catalytic residue.

It belongs to the thioester dehydratase family. FabZ subfamily.

It localises to the cytoplasm. It catalyses the reaction a (3R)-hydroxyacyl-[ACP] = a (2E)-enoyl-[ACP] + H2O. Functionally, involved in unsaturated fatty acids biosynthesis. Catalyzes the dehydration of short chain beta-hydroxyacyl-ACPs and long chain saturated and unsaturated beta-hydroxyacyl-ACPs. The protein is 3-hydroxyacyl-[acyl-carrier-protein] dehydratase FabZ of Helicobacter pylori (strain Shi470).